A 230-amino-acid polypeptide reads, in one-letter code: uncharacterized protein (230 aa).

Disordered regions lie at residues 63-90 (TDCQ…KKTI) and 194-230 (KKLE…YKEH). The segment covering 194-217 (KKLEEREQMDKHPQDRDNKDKEVN) has biased composition (basic and acidic residues).

This is an uncharacterized protein from Caenorhabditis elegans.